Consider the following 169-residue polypeptide: MSTTQSERLRELLEPLVGSQGLDLEGIEVESVGRKRVLRVVVDSDEGADLDAIADVSRALSAKLDETDAMGEGEYTLEVGTPGAERALTEHRHYVRAVDRLVRFQLTEGDELVARILTVDDAGLDLEVPGVKGRKATTRRLAFEDIAKARVQVEFNRKDKKDMTEEEEA.

It belongs to the RimP family.

The protein localises to the cytoplasm. Required for maturation of 30S ribosomal subunits. This chain is Ribosome maturation factor RimP, found in Streptomyces avermitilis (strain ATCC 31267 / DSM 46492 / JCM 5070 / NBRC 14893 / NCIMB 12804 / NRRL 8165 / MA-4680).